Consider the following 321-residue polypeptide: Mas-related G-protein coupled receptor member D (321 aa).

The Extracellular portion of the chain corresponds to 1-33 (MNQTLNSSGTVESALNYSRGSTVHTAYLVLSSL). Residues Asn2, Asn6, and Asn16 are each glycosylated (N-linked (GlcNAc...) asparagine). The helical transmembrane segment at 34 to 54 (AMFTCLCGMAGNSMVIWLLGF) threads the bilayer. The Cytoplasmic segment spans residues 55–59 (RMHRN). A helical membrane pass occupies residues 60–80 (PFCIYILNLAAADLLFLFSMA). Topologically, residues 81–112 (STLSLETQPLVNTTDKVHELMKRLMYFAYTVG) are extracellular. The N-linked (GlcNAc...) asparagine glycan is linked to Asn92. Residues 113–133 (LSLLTAISTQRCLSVLFPIWF) form a helical membrane-spanning segment. Topologically, residues 134 to 142 (KCHRPRHLS) are cytoplasmic. The helical transmembrane segment at 143–163 (AWVCGLLWTLCLLMNGLTSSF) threads the bilayer. Residues 164–184 (CSKFLKFNEDRCFRVDMVQAA) lie on the Extracellular side of the membrane. The helical transmembrane segment at 185–205 (LIMGVLTPVMTLSSLTLFVWV) threads the bilayer. Residues 206–218 (RRSSQQWRRQPTR) lie on the Cytoplasmic side of the membrane. Residues 219–239 (LFVVVLASVLVFLICSLPLSI) form a helical membrane-spanning segment. Over 240 to 257 (YWFVLYWLSLPPEMQVLC) the chain is Extracellular. Residues 258–280 (FSLSRLSSSVSSSANPVIYFLVG) form a helical membrane-spanning segment. The Cytoplasmic portion of the chain corresponds to 281–321 (SRRSHRLPTRSLGTVLQQALREEPELEGGETPTVGTNEMGA). The interval 302–321 (EEPELEGGETPTVGTNEMGA) is disordered.

The protein belongs to the G-protein coupled receptor 1 family. Mas subfamily.

The protein resides in the cell membrane. In terms of biological role, may regulate nociceptor function and/or development, including the sensation or modulation of pain. Functions as a specific membrane receptor for beta-alanine. Beta-alanine at micromolar doses specifically evoked Ca(2+) influx in cells expressing the receptor. Beta-alanine decreases forskolin-stimulated cAMP production in cells expressing the receptor, suggesting that the receptor couples with G-protein G(q) and G(i). This Homo sapiens (Human) protein is Mas-related G-protein coupled receptor member D (MRGPRD).